Here is a 121-residue protein sequence, read N- to C-terminus: UPF0102 protein HRM2_30940 (121 aa).

This sequence belongs to the UPF0102 family.

The protein is UPF0102 protein HRM2_30940 of Desulforapulum autotrophicum (strain ATCC 43914 / DSM 3382 / VKM B-1955 / HRM2) (Desulfobacterium autotrophicum).